Reading from the N-terminus, the 315-residue chain is MAAAIEIPTIVFPNSSAQQRMPVVGMGSAPDFTCKKDTKEAIIEAVKQGYRHFDTAAAYGSEQALGEALKEAIHLGLVSRQDLFVTSKLWVTENHPHLVLPALRKSLKTLQLEYLDLYLIHWPLSSQPGKFSFPIEVEDLLPFDVKGVWESMEECQKLGLTKAIGVSNFSVKKLQNLLSVATIRPVVDQVEMNLAWQQKKLREFCKENGIIVTAFSPLRKGASRGPNEVMENDVLKEIAEAHGKSIAQVSLRWLYEQGVTFVPKSYDKERMNQNLHIFDWALTEQDHHKISQISQSRLISGPTKPQLADLWDDQI.

The Proton donor role is filled by Y59. H121 serves as a coordination point for substrate. 216-274 is a binding site for NADP(+); sequence SPLRKGASRGPNEVMENDVLKEIAEAHGKSIAQVSLRWLYEQGVTFVPKSYDKERMNQN.

The protein belongs to the aldo/keto reductase family. In terms of assembly, monomer.

It carries out the reaction 4-coumaroyl-CoA + 3 malonyl-CoA + NADPH + 4 H(+) = isoliquiritigenin + 3 CO2 + NADP(+) + 4 CoA + H2O. It participates in phytoalexin biosynthesis; glyceollin biosynthesis. Its function is as follows. Co-acts with chalcone synthase in formation of 4,2',4'-trihydroxychalcone, involved in the biosynthesis of glyceollin type phytoalexins. This chain is NAD(P)H-dependent 6'-deoxychalcone synthase, found in Glycine max (Soybean).